Here is a 349-residue protein sequence, read N- to C-terminus: MAHQTGIHATEELKEFFAKARAGSVRLIKVVIEDEQLVLGASQEPVGRWDQDYDRAVLPLLDAQQPCYLLYRLDSQNAQGFEWLFLAWSPDNSPVRLKMLYAATRATVKKEFGGGHIKDELFGTVKDDLSFAGYQKHLSSCAAPAPLTSAERELQQIRINEVKTEISVESKHQTLQGLAFPLQPEAQRALQQLKQKMVNYIQMKLDLERETIELVHTEPTDVAQLPSRVPRDAARYHFFLYKHTHEGDPLESVVFIYSMPGYKCSIKERMLYSSCKSRLLDSVEQDFHLEIAKKIEIGDGAELTAEFLYDEVHPKQHAFKQAFAKPKGPGGKRGHKRLIRGPGENGDDS.

Alanine 2 bears the N-acetylalanine mark. ADF-H domains are found at residues 4–139 (QTGI…KHLS) and 177–313 (GLAF…DEVH). N6-acetyllysine is present on lysine 14. At tyrosine 309 the chain carries Phosphotyrosine. The disordered stretch occupies residues 322–349 (AFAKPKGPGGKRGHKRLIRGPGENGDDS). Residues 330 to 339 (GGKRGHKRLI) show a composition bias toward basic residues. The residue at position 349 (serine 349) is a Phosphoserine.

It belongs to the actin-binding proteins ADF family. Twinfilin subfamily. Interacts with G-actin; ADP-actin form and capping protein (CP). May also be able to interact with TWF1 and phosphoinositides, PI(4,5)P2. When bound to PI(4,5)P2, it is down-regulated. Interacts with MYO7A. In terms of processing, in vitro, phosphorylated by PRKCZ, CK2 and SRC. As to expression, ubiquitously expressed (at protein level).

It localises to the cytoplasm. The protein resides in the cytoskeleton. It is found in the perinuclear region. Its subcellular location is the cell projection. The protein localises to the stereocilium. In terms of biological role, actin-binding protein involved in motile and morphological processes. Inhibits actin polymerization, likely by sequestering G-actin. By capping the barbed ends of filaments, it also regulates motility. Seems to play an important role in clathrin-mediated endocytosis and distribution of endocytic organelles. May play a role in regulating the mature length of the middle and short rows of stereocilia. The chain is Twinfilin-2 (TWF2) from Homo sapiens (Human).